A 148-amino-acid polypeptide reads, in one-letter code: MSQLPFWQQKTLAEMSDSEWESLCDGCGQCCLNKLIDEDTDEIYFTNVACDQLNLKTCQCRNYERRFELEEDCIKLTRENLVTFEWLPPTCAYRLIGEGHDLPKWHPLLAGSKSAMHGERISVRHIAVRESEVIDWQDHILNKPQWAR.

This sequence belongs to the UPF0260 family.

This is UPF0260 protein YE2365 from Yersinia enterocolitica serotype O:8 / biotype 1B (strain NCTC 13174 / 8081).